Reading from the N-terminus, the 227-residue chain is MKFAVIVFPGSNCDADMYHAVKDALGEEVDYLWHTETSVEGYDAILLPGGFSYGDYLRSGSIARFSPIMEDVIRAANEGVPVLGVCNGFQVLLEAGLLPGAMLRNEKLTFICKPVELEVQNNDTFFTSEYEQGETITIPVAHGEGNYYCDDETLKQLEANNQVVFRYTDRVNGSRNHIAGIVNKAGNVLGMMPHPERAVEQLVGGEDGLRLFKSILRNWRESHVVTP.

The region spanning 3 to 225 is the Glutamine amidotransferase type-1 domain; that stretch reads FAVIVFPGSN…LRNWRESHVV (223 aa). The active-site Nucleophile is C86. Active-site residues include H194 and E196.

In terms of assembly, part of the FGAM synthase complex composed of 1 PurL, 1 PurQ and 2 PurS subunits.

It is found in the cytoplasm. It catalyses the reaction N(2)-formyl-N(1)-(5-phospho-beta-D-ribosyl)glycinamide + L-glutamine + ATP + H2O = 2-formamido-N(1)-(5-O-phospho-beta-D-ribosyl)acetamidine + L-glutamate + ADP + phosphate + H(+). The catalysed reaction is L-glutamine + H2O = L-glutamate + NH4(+). Its pathway is purine metabolism; IMP biosynthesis via de novo pathway; 5-amino-1-(5-phospho-D-ribosyl)imidazole from N(2)-formyl-N(1)-(5-phospho-D-ribosyl)glycinamide: step 1/2. Its function is as follows. Part of the phosphoribosylformylglycinamidine synthase complex involved in the purines biosynthetic pathway. Catalyzes the ATP-dependent conversion of formylglycinamide ribonucleotide (FGAR) and glutamine to yield formylglycinamidine ribonucleotide (FGAM) and glutamate. The FGAM synthase complex is composed of three subunits. PurQ produces an ammonia molecule by converting glutamine to glutamate. PurL transfers the ammonia molecule to FGAR to form FGAM in an ATP-dependent manner. PurS interacts with PurQ and PurL and is thought to assist in the transfer of the ammonia molecule from PurQ to PurL. The chain is Phosphoribosylformylglycinamidine synthase subunit PurQ from Halalkalibacterium halodurans (strain ATCC BAA-125 / DSM 18197 / FERM 7344 / JCM 9153 / C-125) (Bacillus halodurans).